A 389-amino-acid chain; its full sequence is DNA replication and repair protein RecF (389 aa).

Residue 30–37 (GPNGFGKT) coordinates ATP.

The protein belongs to the RecF family.

The protein localises to the cytoplasm. Functionally, the RecF protein is involved in DNA metabolism; it is required for DNA replication and normal SOS inducibility. RecF binds preferentially to single-stranded, linear DNA. It also seems to bind ATP. The polypeptide is DNA replication and repair protein RecF (Mycolicibacterium gilvum (strain PYR-GCK) (Mycobacterium gilvum (strain PYR-GCK))).